The following is a 507-amino-acid chain: ATP synthase subunit alpha, mitochondrial (507 aa).

171-178 (GDRQTGKT) contributes to the ATP binding site.

It belongs to the ATPase alpha/beta chains family. In terms of assembly, F-type ATPases have 2 components, CF(1) - the catalytic core - and CF(0) - the membrane proton channel. CF(1) has five subunits: alpha(3), beta(3), gamma(1), delta(1), epsilon(1). CF(0) has three main subunits: a, b and c.

The protein localises to the mitochondrion. It localises to the mitochondrion inner membrane. Mitochondrial membrane ATP synthase (F(1)F(0) ATP synthase or Complex V) produces ATP from ADP in the presence of a proton gradient across the membrane which is generated by electron transport complexes of the respiratory chain. F-type ATPases consist of two structural domains, F(1) - containing the extramembraneous catalytic core, and F(0) - containing the membrane proton channel, linked together by a central stalk and a peripheral stalk. During catalysis, ATP synthesis in the catalytic domain of F(1) is coupled via a rotary mechanism of the central stalk subunits to proton translocation. Subunits alpha and beta form the catalytic core in F(1). Rotation of the central stalk against the surrounding alpha(3)beta(3) subunits leads to hydrolysis of ATP in three separate catalytic sites on the beta subunits. Subunit alpha does not bear the catalytic high-affinity ATP-binding sites. The chain is ATP synthase subunit alpha, mitochondrial (ATPA) from Arabidopsis thaliana (Mouse-ear cress).